A 193-amino-acid chain; its full sequence is Cysteine and glycine-rich protein 1 (193 aa).

The 52-residue stretch at 10-61 (CGVCQKTVYFAEEVQCEGNSFHKSCFLCMVCKKNLDSTTVAVHGEEIYCKSC) folds into the LIM zinc-binding 1 domain. The Nuclear localization signal motif lies at 64-69 (KKYGPK). Position 81 is a phosphoserine (S81). N6-acetyllysine is present on K84. Residue K91 forms a Glycyl lysine isopeptide (Lys-Gly) (interchain with G-Cter in SUMO2) linkage. Residues K112, K131, K137, and K161 each carry the N6-acetyllysine modification. Positions 119 to 170 (CPRCSQAVYAAEKVIGAGKSWHKSCFRCAKCGKGLESTTLADKDGEIYCKGC) constitute an LIM zinc-binding 2 domain. S192 is subject to Phosphoserine.

Interacts with ASCC1; ASCC2 and TRIP4.

The protein resides in the nucleus. In terms of biological role, could play a role in neuronal development. This is Cysteine and glycine-rich protein 1 (Csrp1) from Rattus norvegicus (Rat).